A 75-amino-acid chain; its full sequence is Kappa-thalatoxin-Cad2a (75 aa).

Residues 1–22 form the signal peptide; that stretch reads MKFQMIAAVLLIAFCLCVVVTA. Positions 23–40 are excised as a propeptide; that stretch reads RMELQDVEDMKNGSFQKR. Positions 43–75 constitute a ShKT domain; that stretch reads CIDTIPKSRCTAFQCKNSMKYRLSFCRKTCGTC. Cystine bridges form between Cys43–Cys75, Cys52–Cys68, and Cys57–Cys72.

Belongs to the sea anemone type 1 potassium channel toxin family. Type 1a subfamily.

The protein localises to the secreted. The protein resides in the nematocyst. Its function is as follows. Inhibits voltage-gated potassium channels (Kv) with higher potency for Kv1.1/KCNA1 and Kv1.3/KCNA3. The sequence is that of Kappa-thalatoxin-Cad2a from Cryptodendrum adhaesivum (Adhesive sea anemone).